The primary structure comprises 119 residues: Large ribosomal subunit protein bL19 (119 aa).

This sequence belongs to the bacterial ribosomal protein bL19 family.

In terms of biological role, this protein is located at the 30S-50S ribosomal subunit interface and may play a role in the structure and function of the aminoacyl-tRNA binding site. The protein is Large ribosomal subunit protein bL19 of Borreliella afzelii (strain PKo) (Borrelia afzelii).